A 309-amino-acid polypeptide reads, in one-letter code: Mitogen-activated protein kinase kinase 8 (309 aa).

Residues 53–305 (LDRISVLGSG…ASQLLNHPFL (253 aa)) enclose the Protein kinase domain. Residues 59–67 (LGSGNGGTV) and Lys-82 contribute to the ATP site. Asp-167 (proton acceptor) is an active-site residue. 2 positions are modified to phosphoserine: Ser-195 and Ser-201. Thr-205 is subject to Phosphothreonine.

This sequence belongs to the protein kinase superfamily. STE Ser/Thr protein kinase family. MAP kinase kinase subfamily. Post-translationally, phosphorylation at Ser-195 and Ser-201 by MAP kinase kinase kinases positively regulates kinase activity.

The catalysed reaction is L-seryl-[protein] + ATP = O-phospho-L-seryl-[protein] + ADP + H(+). The enzyme catalyses L-threonyl-[protein] + ATP = O-phospho-L-threonyl-[protein] + ADP + H(+). It carries out the reaction L-tyrosyl-[protein] + ATP = O-phospho-L-tyrosyl-[protein] + ADP + H(+). The sequence is that of Mitogen-activated protein kinase kinase 8 (MKK8) from Arabidopsis thaliana (Mouse-ear cress).